The primary structure comprises 191 residues: Ribosome maturation factor RimP (191 aa).

The protein belongs to the RimP family.

The protein localises to the cytoplasm. Required for maturation of 30S ribosomal subunits. The chain is Ribosome maturation factor RimP from Caulobacter vibrioides (strain NA1000 / CB15N) (Caulobacter crescentus).